Reading from the N-terminus, the 1385-residue chain is MALFRKFFFKKPPDGLLLITDNIYVFDHCFSMKEMEEDHFEAHIRGVAAHLLDNFGDHSFMISNFGIRDEESPIYHILSEYGMTVLDYPGHYEGCPLLTMEMVHCILKSSESWLSLGQRNFLIMHCEQGCWPILAFMLAALLIYLGQYSDEQKTLDMLYKQSPVELLEMFSPLNPMPSQLRYLRYVSMRNVVPEWPPADRALTLDSVILRMVPDFHGQGGFRPIFRIYGPDPLMPTDQTPKVLFSTPKRSNVVRFYSQADELVKINLQCHVQGDVVLECINLYEDLDREDMVIFSDMDATTSHITTEPVSHQEKQGLGIEEFAKVLDIFNHLDWLDGKKDTSLHIPQRKASSTSQGNIDESPADGSETFFDTKEELDFDSLSGESSSSLVLKLTDDYVMVGCTELQQDPLHSTSAEVPSKIQTIEVAPSRTRPPSVLLSPTKVKMPKTSASSMALPSSTVIPQAPSSPVQPQGLIDSAVQIAPAQSASKSAENSGSQTPVNQEPSPLTVNNSASTASLIALCTPPPLPPPPPTVSLAPVSPILPINTSTSIISVSLRSIMPSPSQPPESSASPLALARNEELVKSQEPSCENLEKFPPEFSRASSVTALSSDSLLSIEKESSSTRTYVPEALPAMPLTSDTRTSLISISTAASPPLPPPLPPPLKPSTVMFPLSYGKEVASTKEKAAPTQPPLPPPPPPIQPTLISNSIYSSTSSVVSAPLKRGQSPAPPPPPPPPPPPPFPVSSFSPPQPPPQPPSAVPGLQASPVPPPPPPPPPPMIPGMKTPPTPPPPPPAAPGQQAPAVPPPPPPPPPPMVPGMQTRPIPPPPPPSQTNSLVSSFPSTSKRIPPPPPPPSQTSSLVSSLPSSRKGNDVAAPRPPPPPPLYSRSSHVTSAPSAPPAPPLPPPKLVGASKPSQEQMITWPPPPPPGPPPKNSSNSLPSKGNVVSSSPPPPPTFSFGAKDRSTARSRSPRSLRPNQSSKRTPLKPLHWVKVSRATQGSLWAETQKSDEASRTPEIDISELESLFSVAMPNMEEKRARQRPSVAAKQEKVLLIDLQRSKNCEIMLRNIKMPLPDLMNSVLALDDSIVDGDQVDYLIKFCPTKEEMELLKGFTGNKENLGKCEQFFLEMMKVPRVESKLRILSFKIKFLTQVADLKNSLNTINSVAEEVRNSVKLKRVMQTILSLGNALNQGTARGSAVGFRLDSLLKLIDIRARNNRMTLMHYLCKVLSDKLPEVLDFNKDLTYLEPASKIQLKELAEEMQAITKGLEKVEQELTTSEKDGPGSEIFYKKLKEFLADAQAEGRSLAFLYSTAGKSADSLAHYFGEDPVRCPFEQVVSTLLSFVKTFERAHAENLRQMELEKKRAQMEAEKEKVKAAAHKEDLLEP.

Residues 9-193 enclose the Phosphatase tensin-type domain; it reads FKKPPDGLLL…RYVSMRNVVP (185 aa). The active-site Phosphocysteine intermediate is the Cys-126. The C2 tensin-type domain occupies 199 to 358; the sequence is DRALTLDSVI…KASSTSQGNI (160 aa). 4 disordered regions span residues 345-367, 427-510, 649-989, and 1362-1385; these read IPQRKASSTSQGNIDESPADGSE, APSR…LTVN, STAA…PLHW, and KRAQMEAEKEKVKAAAHKEDLLEP. 3 stretches are compositionally biased toward polar residues: residues 349–358, 448–470, and 483–510; these read KASSTSQGNI, TSASSMALPSSTVIPQAPSSPVQ, and PAQSASKSAENSGSQTPVNQEPSPLTVN. 2 stretches are compositionally biased toward pro residues: residues 654-665 and 689-701; these read PPLPPPLPPPLK and TQPPLPPPPPPIQ. Over residues 702 to 718 the composition is skewed to low complexity; that stretch reads PTLISNSIYSSTSSVVS. 3 stretches are compositionally biased toward pro residues: residues 727 to 758, 766 to 795, and 802 to 815; these read PAPPPPPPPPPPPPFPVSSFSPPQPPPQPPSA, PVPPPPPPPPPPMIPGMKTPPTPPPPPPAA, and AVPPPPPPPPPPMV. Residues 855–867 show a composition bias toward low complexity; it reads QTSSLVSSLPSSR. 2 stretches are compositionally biased toward pro residues: residues 895–906 and 921–932; these read SAPPAPPLPPPK and WPPPPPPGPPPK. A compositionally biased stretch (low complexity) spans 933-942; it reads NSSNSLPSKG. An FH2 domain is found at 974–1372; that stretch reads RPNQSSKRTP…RAQMEAEKEK (399 aa).

It belongs to the formin-like family. Class-II subfamily.

The protein is Formin-like protein 7 (FH7) of Oryza sativa subsp. japonica (Rice).